The chain runs to 444 residues: Acyl-CoA (8-3)-desaturase (444 aa).

The residue at position 1 (Met-1) is an N-acetylmethionine. Over 1-121 (MAPDPVAAKT…FRELRATVEQ (121 aa)) the chain is Cytoplasmic. Residues 17–94 (PRYFTWDEVA…MNSLLIGELS (78 aa)) form the Cytochrome b5 heme-binding domain. The helical transmembrane segment at 122 to 142 (MGLMKANHVFFLLYLLHILLL) threads the bilayer. The Lumenal segment spans residues 143–146 (DGAA). The chain crosses the membrane as a helical span at residues 147-167 (WLTLWIFGTSFLPFLLCAVLL). Residues 168–267 (TAAQIQAGWL…PYNHQHKYFF (100 aa)) are Cytoplasmic-facing. Positions 179-183 (HDLGH) match the Histidine box-1 motif. The short motif at 216–220 (HFQHH) is the Histidine box-2 element. Residues 268-288 (LIGPPALVPFFFQWYVFYFVI) form a helical membrane-spanning segment. The Lumenal segment spans residues 289–305 (QRKKWVDLAWMITFYIR). The helical transmembrane segment at 306–326 (LLLTYVPLLGLKAFLGLYFIV) threads the bilayer. Topologically, residues 327–444 (RFLESNWFVW…QLWLDAYLHQ (118 aa)) are cytoplasmic. The Histidine box-3 signature appears at 382-386 (QIEHH).

The protein belongs to the fatty acid desaturase type 1 family. Widely expressed. Expressed in brain, liver and thymus (at protein level). Isoform 1 seems to be more abundant than isoform 2. Expression of isoform 2 is very low in spleen and not detectable in skeletal muscle.

The protein resides in the endoplasmic reticulum membrane. The protein localises to the mitochondrion. The enzyme catalyses (8Z,11Z,14Z)-eicosatrienoyl-CoA + 2 Fe(II)-[cytochrome b5] + O2 + 2 H(+) = (5Z,8Z,11Z,14Z)-eicosatetraenoyl-CoA + 2 Fe(III)-[cytochrome b5] + 2 H2O. It catalyses the reaction (8Z,11Z,14Z,17Z)-eicosatetraenoyl-CoA + 2 Fe(II)-[cytochrome b5] + O2 + 2 H(+) = (5Z,8Z,11Z,14Z,17Z)-eicosapentaenoyl-CoA + 2 Fe(III)-[cytochrome b5] + 2 H2O. The catalysed reaction is (11E)-octadecenoyl-CoA + 2 Fe(II)-[cytochrome b5] + O2 + 2 H(+) = (5Z,11E)-octadecadienoyl-CoA + 2 Fe(III)-[cytochrome b5] + 2 H2O. It participates in lipid metabolism; polyunsaturated fatty acid biosynthesis. Acts as a front-end fatty acyl-coenzyme A (CoA) desaturase that introduces a cis double bond at carbon 5 located between a preexisting double bond and the carboxyl end of the fatty acyl chain. Involved in biosynthesis of highly unsaturated fatty acids (HUFA) from the essential polyunsaturated fatty acids (PUFA) linoleic acid (LA) (18:2n-6) and alpha-linolenic acid (ALA) (18:3n-3) precursors. Specifically, desaturates dihomo-gamma-linoleoate (DGLA) (20:3n-6) and eicosatetraenoate (ETA) (20:4n-3) to generate arachidonate (AA) (20:4n-6) and eicosapentaenoate (EPA) (20:5n-3), respectively. As a rate limiting enzyme for DGLA (20:3n-6) and AA (20:4n-6)-derived eicosanoid biosynthesis, controls the metabolism of inflammatory lipids like prostaglandin E2, critical for efficient acute inflammatory response and maintenance of epithelium homeostasis. Contributes to membrane phospholipid biosynthesis by providing AA (20:4n-6) as a major acyl chain esterified into phospholipids. In particular, regulates phosphatidylinositol-4,5-bisphosphate levels, modulating inflammatory cytokine production in T-cells. Also desaturates (11E)-octadecenoate (trans-vaccenoate)(18:1n-9), a metabolite in the biohydrogenation pathway of LA (18:2n-6). Functionally, does not exhibit any catalytic activity toward 20:3n-6, but it may enhance FADS2 activity. The protein is Acyl-CoA (8-3)-desaturase of Papio anubis (Olive baboon).